Reading from the N-terminus, the 252-residue chain is MSATELFARRATLARSVRLLSEFRFEQSDPARFYGALADDTAAMVADLWQAATETTPGGRTVLDVGGGPGFFAAAFTRRGMEYVGVEPDPREMHAGPAAQVGGRYVRASGTSLPFADGSVDVCLSSNVAEHVPDPWRLGNEMLRVTRPGGLAVLSYTVWLGPFGGHETGLTHYLGGARAADRYTRKHGHRPKNDYGSSLFAVSAHDGLEWAASTGALIAAFPRYHPRWAWWTNAVPGLREFVVSNQVLVLQP.

It belongs to the methyltransferase superfamily.

This is an uncharacterized protein from Mycobacterium sp. (strain KMS).